A 268-amino-acid chain; its full sequence is Type III pantothenate kinase (268 aa).

18-25 is a binding site for ATP; that stretch reads DIGNTTTT. Residues Tyr-108 and 115-118 each bind substrate; that span reads GADR. Catalysis depends on Asp-117, which acts as the Proton acceptor. Residue Asp-138 participates in K(+) binding. Thr-141 serves as a coordination point for ATP. Residue Thr-193 participates in substrate binding.

The protein belongs to the type III pantothenate kinase family. As to quaternary structure, homodimer. It depends on NH4(+) as a cofactor. K(+) serves as cofactor.

It localises to the cytoplasm. It catalyses the reaction (R)-pantothenate + ATP = (R)-4'-phosphopantothenate + ADP + H(+). The protein operates within cofactor biosynthesis; coenzyme A biosynthesis; CoA from (R)-pantothenate: step 1/5. In terms of biological role, catalyzes the phosphorylation of pantothenate (Pan), the first step in CoA biosynthesis. The polypeptide is Type III pantothenate kinase (Chlorobaculum parvum (strain DSM 263 / NCIMB 8327) (Chlorobium vibrioforme subsp. thiosulfatophilum)).